A 303-amino-acid chain; its full sequence is DCN1-like protein 3 (303 aa).

Disordered regions lie at residues 1-41 and 62-83; these read MGQC…HLSI and EASQPLAAGGDTKKKEQGTGAE. A lipid anchor (N-myristoyl glycine) is attached at Gly-2. The region spanning 85–277 is the DCUN1 domain; the sequence is SSVQRIEELF…LFDTFVEWEM (193 aa). Positions 284–303 are disordered; sequence EETKCIPCSGTDDQSTEGQT. Positions 294-303 are enriched in polar residues; the sequence is TDDQSTEGQT.

As to quaternary structure, may interact (via the DCUN1 domain) with unneddylated cullins.

It localises to the cell membrane. The protein resides in the cytoplasm. It is found in the nucleus. Its subcellular location is the perinuclear region. Its function is as follows. Contributes to the neddylation of all cullins by transferring NEDD8 from N-terminally acetylated NEDD8-conjugating E2s enzyme to different cullin C-terminal domain-RBX complexes. At the cell membrane, can promote and as well inhibit cullins neddylation. In Xenopus tropicalis (Western clawed frog), this protein is DCN1-like protein 3.